We begin with the raw amino-acid sequence, 219 residues long: NAD(P)H-quinone oxidoreductase subunit K 2 (219 aa).

[4Fe-4S] cluster is bound by residues Cys-53, Cys-54, Cys-118, and Cys-149.

The protein belongs to the complex I 20 kDa subunit family. In terms of assembly, NDH-1 can be composed of about 15 different subunits; different subcomplexes with different compositions have been identified which probably have different functions. [4Fe-4S] cluster serves as cofactor.

It is found in the cellular thylakoid membrane. It catalyses the reaction a plastoquinone + NADH + (n+1) H(+)(in) = a plastoquinol + NAD(+) + n H(+)(out). It carries out the reaction a plastoquinone + NADPH + (n+1) H(+)(in) = a plastoquinol + NADP(+) + n H(+)(out). Functionally, NDH-1 shuttles electrons from an unknown electron donor, via FMN and iron-sulfur (Fe-S) centers, to quinones in the respiratory and/or the photosynthetic chain. The immediate electron acceptor for the enzyme in this species is believed to be plastoquinone. Couples the redox reaction to proton translocation, and thus conserves the redox energy in a proton gradient. Cyanobacterial NDH-1 also plays a role in inorganic carbon-concentration. This Synechocystis sp. (strain ATCC 27184 / PCC 6803 / Kazusa) protein is NAD(P)H-quinone oxidoreductase subunit K 2.